Reading from the N-terminus, the 349-residue chain is Dipeptide transport ATP-binding protein DppD (349 aa).

The ABC transporter domain occupies 7-258 (LEVKNLHVNF…PQHPYTWGLL (252 aa)). 43–50 (GESGSGKS) provides a ligand contact to ATP.

This sequence belongs to the ABC transporter superfamily. In terms of assembly, the complex is composed of two ATP-binding proteins (DppD and DppF), two transmembrane proteins (DppB and DppC) and a solute-binding protein (DppA).

Its subcellular location is the cell membrane. The enzyme catalyses a dipeptide(out) + ATP + H2O = a dipeptide(in) + ADP + phosphate + H(+). Functionally, part of the ABC transporter DppABCDF involved in dipeptide transport. Responsible for energy coupling to the transport system. The protein is Dipeptide transport ATP-binding protein DppD of Lactococcus lactis subsp. cremoris (strain MG1363).